Reading from the N-terminus, the 837-residue chain is Thioredoxin domain-containing protein 3 homolog (837 aa).

Residues 6–115 (EQIQLQKEIL…LKNVERELKQ (110 aa)) enclose the Thioredoxin domain. The cysteines at positions 39 and 42 are disulfide-linked. NDK regions lie at residues 201-345 (KEVT…SVPI), 355-491 (IEKT…FPKQ), and 493-629 (TLAV…EVLP). The interval 633–837 (VKDSVASISM…EEKTEEQTAS (205 aa)) is disordered. Polar residues predominate over residues 638–647 (ASISMEQSQV). The segment covering 652–670 (EEGGEEQTEQPAGEGEEQQ) has biased composition (acidic residues). Low complexity-rich tracts occupy residues 671–707 (AEQP…PPAE), 718–752 (QQTQ…AEQT), and 766–787 (APAT…QQTQ). Over residues 805-819 (AGGGEEAVATEGGGE) the composition is skewed to gly residues. The span at 820–837 (GDAKPEGGEEKTEEQTAS) shows a compositional bias: basic and acidic residues.

This sequence in the C-terminal section; belongs to the NDK family. In terms of assembly, monomer. As to expression, testis-specific. In sperm, it is a component of the arm dynein of sperm axoneme.

Its function is as follows. Probably required during the final stages of sperm tail maturation in the testis and/or epididymis, where extensive disulfide bonding of fibrous sheath (FS) proteins occurs. In vitro, it has neither nucleoside diphosphate kinase (NDPK) activity nor reducing activity on disulfide bonds. Exhibits a 3'-5' exonuclease activity with a preference for single-stranded DNA, suggesting roles in DNA proofreading and repair. This chain is Thioredoxin domain-containing protein 3 homolog (NME8), found in Heliocidaris crassispina (Sea urchin).